The primary structure comprises 395 residues: Succinyl-diaminopimelate desuccinylase (395 aa).

His-74 is a Zn(2+) binding site. The active site involves Asp-76. Asp-107 contributes to the Zn(2+) binding site. Glu-141 serves as the catalytic Proton acceptor. The Zn(2+) site is built by Glu-142, Glu-170, and His-368.

The protein belongs to the peptidase M20A family. DapE subfamily. Homodimer. It depends on Zn(2+) as a cofactor. Requires Co(2+) as cofactor.

The catalysed reaction is N-succinyl-(2S,6S)-2,6-diaminopimelate + H2O = (2S,6S)-2,6-diaminopimelate + succinate. It functions in the pathway amino-acid biosynthesis; L-lysine biosynthesis via DAP pathway; LL-2,6-diaminopimelate from (S)-tetrahydrodipicolinate (succinylase route): step 3/3. Its function is as follows. Catalyzes the hydrolysis of N-succinyl-L,L-diaminopimelic acid (SDAP), forming succinate and LL-2,6-diaminopimelate (DAP), an intermediate involved in the bacterial biosynthesis of lysine and meso-diaminopimelic acid, an essential component of bacterial cell walls. This Brucella canis (strain ATCC 23365 / NCTC 10854 / RM-666) protein is Succinyl-diaminopimelate desuccinylase.